A 284-amino-acid polypeptide reads, in one-letter code: MTSTQFDCQYCTASLLGKKYVLKDDNLYCISCYDRIFSNYCEQCKEPIESDSKDLCYKNRHWHEGCFRCNKCHHSLVEKPFVAKDERLLCTDCYSNECSSKCFHCKRTIMPGSRKMEFKGNYWHETCFVCEHCRQPIGTKPLISKESGNYCVPCFEKEFAHYCNFCKKVITSGGITFRDQIWHKECFLCSGCRKELYEEAFMSKDDFPFCLDCYNHLYAKKCAACTKPITGLRGAKFICFQDRQWHSECFNCGKCSVSLVGEGFLTQNMEILCRKCGSGADTDM.

Residues 8–32 (CQYCTASLLGKKYVLKDDNLYCISC) form a C4-type zinc finger. LIM zinc-binding domains follow at residues 39–100 (NYCE…ECSS), 101–160 (KCFH…KEFA), 161–220 (HYCN…LYAK), and 221–283 (KCAA…ADTD).

Interacts with CREM (via the third LIM domain). Interacts (via second LIM domain) with SPAG8.

It is found in the nucleus. May be involved in the regulation of spermatogenesis. Stimulates CREM transcriptional activity in a phosphorylation-independent manner. This Rattus norvegicus (Rat) protein is Four and a half LIM domains protein 5 (Fhl5).